Reading from the N-terminus, the 321-residue chain is MLVDSFNRVIDYIRVSVTKQCNFRCQYCMPATPLNFFDNEELLPLDNVLEFLKIAIDEGVKKIRITGGEPLLRKGLDEFIAKLHAYNKEVALVLSTNGFLLKKMAKDLKKAGLSRVNVSLDSLKSDRVLKISQKDALKNTLEGIEESLKVGLKLKLNTVVMKSVNGDEILDLLEYAKNRRIQIRYIEFMENTHAKSFVKGLKEEEILDLIAQKYKIMETEKPKQGSSKIYTLENGYQFGIIAPHSDDFCQSCNRIRLASDGKICPCLYYQDAIDAKEAIINKDTKMMKRLLKQSVINKPEKNMWNDKNSETPTRAFYYTGG.

The 229-residue stretch at Ser-5–Glu-233 folds into the Radical SAM core domain. Arg-14 serves as a coordination point for GTP. Residues Cys-21 and Cys-25 each coordinate [4Fe-4S] cluster. Position 27 (Tyr-27) interacts with S-adenosyl-L-methionine. Position 28 (Cys-28) interacts with [4Fe-4S] cluster. Residue Arg-64 participates in GTP binding. Gly-68 contacts S-adenosyl-L-methionine. Ser-95 contributes to the GTP binding site. Ser-119 contributes to the S-adenosyl-L-methionine binding site. Lys-155 provides a ligand contact to GTP. Residue Met-189 participates in S-adenosyl-L-methionine binding. Residues Cys-249 and Cys-252 each coordinate [4Fe-4S] cluster. Residue Arg-254 to Arg-256 participates in GTP binding. Cys-266 provides a ligand contact to [4Fe-4S] cluster.

Belongs to the radical SAM superfamily. MoaA family. Monomer and homodimer. [4Fe-4S] cluster serves as cofactor.

The enzyme catalyses GTP + AH2 + S-adenosyl-L-methionine = (8S)-3',8-cyclo-7,8-dihydroguanosine 5'-triphosphate + 5'-deoxyadenosine + L-methionine + A + H(+). It participates in cofactor biosynthesis; molybdopterin biosynthesis. Catalyzes the cyclization of GTP to (8S)-3',8-cyclo-7,8-dihydroguanosine 5'-triphosphate. This is GTP 3',8-cyclase from Helicobacter pylori (strain HPAG1).